Consider the following 472-residue polypeptide: Putative ankyrin repeat protein L675 (472 aa).

ANK repeat units lie at residues 125–156 (YKANRFYLGEKFDLGDVEVVKFFIKKGTDIHL), 187–216 (DNFKVLAKICRDGNLELLRLLELNGFNETI), 265–295 (YKTKVLLMAIANNHAELVQYLLTQNPSDKDI), 297–323 (HAMLYAVTTANASLLDYTLKNGGNIHY), 325–351 (NDQALILAVRFNHISMVRKLICLGMDS), 352–381 (NNVFALTMAAENNHQDIVQHLINRGADVNA), 382–411 (NNRSALIAAVKNGHLKIVQMFVNNGADIKI), and 413–440 (DTVIKTACKNGHNNIVKYLLGKGVSCDD).

This is Putative ankyrin repeat protein L675 from Acanthamoeba polyphaga (Amoeba).